A 330-amino-acid chain; its full sequence is MISLESQVLERHLSFFDGKSVLFAGGISDNFPQTLASKCPSIQIWSCHFDYARTQSAVNFSVEFQGQADLIVYYWTKNKQEVNFQLLQLLAQAPIGQEILIIGENRCGVRSVEKTLAPYGEIAKIDSARRCGLYHFSLQNKPHFELKNFWKTYQHSTLENLTIYSLPGVFSAAELDTGTELLLSTIDNKIKGKVLDLGCGAGVIGSMIKKRVPNAQITMTDIHAMALESARKTLSENQLQGKVYASDVFSDIEGKFDLIISNPPFHDGIDTAYRAVTELITQAKWHLNQYGELRIVANAFLPYPELLRQHFNDYQVLAQTGKFKVYSVKN.

This sequence belongs to the methyltransferase superfamily. RsmC family. Monomer.

The protein resides in the cytoplasm. It carries out the reaction guanosine(1207) in 16S rRNA + S-adenosyl-L-methionine = N(2)-methylguanosine(1207) in 16S rRNA + S-adenosyl-L-homocysteine + H(+). Its function is as follows. Specifically methylates the guanine in position 1207 of 16S rRNA in the 30S particle. In Haemophilus influenzae (strain PittEE), this protein is Ribosomal RNA small subunit methyltransferase C.